A 586-amino-acid polypeptide reads, in one-letter code: Asparagine synthetase, nodule [glutamine-hydrolyzing] (586 aa).

Catalysis depends on Cys-2, which acts as the For GATase activity. Residues 2-185 (CGILAVLGCS…PGHLYSSKER (184 aa)) enclose the Glutamine amidotransferase type-2 domain. L-glutamine contacts are provided by residues 50–54 (RLAIV), 75–77 (NGE), and Asp-98. One can recognise an Asparagine synthetase domain in the interval 193–517 (PPWFNEAIIP…PQNSARLTVP (325 aa)). Residues Leu-232, Val-268, and 342-343 (SG) contribute to the ATP site.

As to expression, root nodules.

It catalyses the reaction L-aspartate + L-glutamine + ATP + H2O = L-asparagine + L-glutamate + AMP + diphosphate + H(+). It participates in amino-acid biosynthesis; L-asparagine biosynthesis; L-asparagine from L-aspartate (L-Gln route): step 1/1. The sequence is that of Asparagine synthetase, nodule [glutamine-hydrolyzing] (AS1) from Pisum sativum (Garden pea).